Here is an 87-residue protein sequence, read N- to C-terminus: Small ribosomal subunit protein uS17 (87 aa).

This sequence belongs to the universal ribosomal protein uS17 family. As to quaternary structure, part of the 30S ribosomal subunit.

Functionally, one of the primary rRNA binding proteins, it binds specifically to the 5'-end of 16S ribosomal RNA. The chain is Small ribosomal subunit protein uS17 from Lacticaseibacillus casei (strain BL23) (Lactobacillus casei).